The following is a 237-amino-acid chain: Ubiquinone biosynthesis O-methyltransferase (237 aa).

Positions 39, 59, 80, and 124 each coordinate S-adenosyl-L-methionine.

It belongs to the methyltransferase superfamily. UbiG/COQ3 family.

The enzyme catalyses a 3-demethylubiquinol + S-adenosyl-L-methionine = a ubiquinol + S-adenosyl-L-homocysteine + H(+). It catalyses the reaction a 3-(all-trans-polyprenyl)benzene-1,2-diol + S-adenosyl-L-methionine = a 2-methoxy-6-(all-trans-polyprenyl)phenol + S-adenosyl-L-homocysteine + H(+). The protein operates within cofactor biosynthesis; ubiquinone biosynthesis. Functionally, O-methyltransferase that catalyzes the 2 O-methylation steps in the ubiquinone biosynthetic pathway. This is Ubiquinone biosynthesis O-methyltransferase from Vibrio atlanticus (strain LGP32) (Vibrio splendidus (strain Mel32)).